The sequence spans 567 residues: Nucleolus and neural progenitor protein (567 aa).

The residue at position 265 (serine 265) is a Phosphoserine. The segment at 437–457 (SKHHLRQRRSQNKFLRRQRKP) is disordered. Positions 442 to 460 (RQRRSQNKFLRRQRKPQRK) are nuclear localization signal.

Belongs to the nepro family.

The protein resides in the nucleus. It localises to the nucleolus. Its function is as follows. May play a role in cortex development as part of the Notch signaling pathway. Downstream of Notch may repress the expression of proneural genes and inhibit neuronal differentiation thereby maintaining neural progenitors. May also play a role in preimplentation embryo development. This is Nucleolus and neural progenitor protein from Homo sapiens (Human).